The following is a 248-amino-acid chain: Small ribosomal subunit protein uS3 (248 aa).

The 69-residue stretch at 39–107 (IRQMLLKQLK…EVFINIVEIR (69 aa)) folds into the KH type-2 domain. Positions 214–248 (AVDKRMTAESEGPSSGRPPRRDRDRDRDRDRDSAA) are disordered. The span at 232 to 248 (PRRDRDRDRDRDRDSAA) shows a compositional bias: basic and acidic residues.

The protein belongs to the universal ribosomal protein uS3 family. In terms of assembly, part of the 30S ribosomal subunit. Forms a tight complex with proteins S10 and S14.

Its function is as follows. Binds the lower part of the 30S subunit head. Binds mRNA in the 70S ribosome, positioning it for translation. This chain is Small ribosomal subunit protein uS3, found in Azorhizobium caulinodans (strain ATCC 43989 / DSM 5975 / JCM 20966 / LMG 6465 / NBRC 14845 / NCIMB 13405 / ORS 571).